The chain runs to 288 residues: Bifunctional protein FolD (288 aa).

NADP(+) is bound by residues 168–170 (GRG), threonine 195, and valine 236.

It belongs to the tetrahydrofolate dehydrogenase/cyclohydrolase family. As to quaternary structure, homodimer.

The catalysed reaction is (6R)-5,10-methylene-5,6,7,8-tetrahydrofolate + NADP(+) = (6R)-5,10-methenyltetrahydrofolate + NADPH. It catalyses the reaction (6R)-5,10-methenyltetrahydrofolate + H2O = (6R)-10-formyltetrahydrofolate + H(+). It participates in one-carbon metabolism; tetrahydrofolate interconversion. Functionally, catalyzes the oxidation of 5,10-methylenetetrahydrofolate to 5,10-methenyltetrahydrofolate and then the hydrolysis of 5,10-methenyltetrahydrofolate to 10-formyltetrahydrofolate. The protein is Bifunctional protein FolD of Mycobacterium sp. (strain JLS).